Reading from the N-terminus, the 116-residue chain is Iron-sulfur cluster insertion protein ErpA (116 aa).

The iron-sulfur cluster site is built by C44, C108, and C110.

Belongs to the HesB/IscA family. In terms of assembly, homodimer. Iron-sulfur cluster serves as cofactor.

Functionally, required for insertion of 4Fe-4S clusters for at least IspG. The sequence is that of Iron-sulfur cluster insertion protein ErpA from Shewanella loihica (strain ATCC BAA-1088 / PV-4).